Reading from the N-terminus, the 60-residue chain is Large ribosomal subunit protein bL32 (60 aa).

Over residues 1–23 the composition is skewed to basic residues; the sequence is MAKHPVPKKKTSKARRDARRSHH. The disordered stretch occupies residues 1-30; sequence MAKHPVPKKKTSKARRDARRSHHALTPPTL.

As to quaternary structure, part of the 50S ribosomal subunit.

Its function is as follows. Found on the solvent side of the large subunit. The polypeptide is Large ribosomal subunit protein bL32 (rpmF) (Thermus thermophilus (strain ATCC 27634 / DSM 579 / HB8)).